The sequence spans 129 residues: Protein BEX2 (129 aa).

The tract at residues 1-37 (MESKVEQGVKNLNMENDHQEKEEKEEKPQDASKRDPI) is disordered. The span at 15–36 (ENDHQEKEEKEEKPQDASKRDP) shows a compositional bias: basic and acidic residues. R51 carries the omega-N-methylarginine modification. The segment at 118–122 (HHDHH) is his cluster. C126 contacts Zn(2+).

This sequence belongs to the BEX family. Interacts with LMO2, possibly leading to regulate the transcriptional activity of a DNA-binding complex containing LMO2. Interacts with OMP. In terms of tissue distribution, primarily localized to neuronal cells within several regions of the brain, including the olfactory epithelium, bulb, peri/paraventricular nuclei, suprachiasmatic nucleus, arcuate nucleus, median eminence, lateral hypothalamic area, thalamus, hippocampus and cerebellum (at protein level).

It localises to the cytoplasm. It is found in the nucleus. In terms of biological role, regulator of mitochondrial apoptosis and G1 cell cycle. Regulates the level of PP2A regulatory subunit B and PP2A phosphatase activity. In absence of reductive stress, acts as a pseudosubstrate for the CRL2(FEM1B) complex: associates with FEM1B via zinc, thereby preventing association between FEM1B and its substrates. The sequence is that of Protein BEX2 from Mus musculus (Mouse).